We begin with the raw amino-acid sequence, 94 residues long: Large ribosomal subunit protein uL23 (94 aa).

This sequence belongs to the universal ribosomal protein uL23 family. Part of the 50S ribosomal subunit. Contacts protein L29, and trigger factor when it is bound to the ribosome.

In terms of biological role, one of the early assembly proteins it binds 23S rRNA. One of the proteins that surrounds the polypeptide exit tunnel on the outside of the ribosome. Forms the main docking site for trigger factor binding to the ribosome. The protein is Large ribosomal subunit protein uL23 of Listeria monocytogenes serotype 4b (strain CLIP80459).